Here is a 374-residue protein sequence, read N- to C-terminus: MSDNSQKKVIVGMSGGVDSSVSAYLLKQQGYQVEGLFMKNWEEDDNEEYCTAAEDLADAQAVCDKLGIHLHTINFAAEYWDNVFEYFLAEYKAGRTPNPDILCNKEIKFKAFLEFADEVLEADYIAMGHYVRRSFPENGEKPQMLRGLDSNKDQSYFLYTLSHEQVARSLFPVGDLEKPEVRRIAEEQGLITAKKKDSTGICFIGERKFTEFLGRYLPAQPGNIETPEGEVIGQHQGLMYHTLGQRKGLHIGGRKGGGGNEDPWFVGEKDLDRNVLIAVQGKDHPMLKSEGLLASQLHWVDREPIRDVMKCTVKTRYRQQDIPCTIIPIDDENIKVIFDEPQIAVTPGQSAVFYKDDVCLGGGIIEQRIKYSQA.

Residues 12–19 and M38 contribute to the ATP site; that span reads GMSGGVDS. Positions 98–100 are interaction with target base in tRNA; it reads NPD. C103 (nucleophile) is an active-site residue. C103 and C202 are oxidised to a cystine. G128 contributes to the ATP binding site. An interaction with tRNA region spans residues 152-154; that stretch reads KDQ. C202 serves as the catalytic Cysteine persulfide intermediate. The interval 316–317 is interaction with tRNA; sequence RY.

The protein belongs to the MnmA/TRMU family.

The protein localises to the cytoplasm. The enzyme catalyses S-sulfanyl-L-cysteinyl-[protein] + uridine(34) in tRNA + AH2 + ATP = 2-thiouridine(34) in tRNA + L-cysteinyl-[protein] + A + AMP + diphosphate + H(+). Catalyzes the 2-thiolation of uridine at the wobble position (U34) of tRNA, leading to the formation of s(2)U34. The sequence is that of tRNA-specific 2-thiouridylase MnmA from Vibrio parahaemolyticus serotype O3:K6 (strain RIMD 2210633).